A 123-amino-acid polypeptide reads, in one-letter code: Acidic phospholipase A2 (123 aa).

7 cysteine pairs are disulfide-bonded: Cys-26–Cys-116, Cys-28–Cys-44, Cys-43–Cys-95, Cys-49–Cys-123, Cys-50–Cys-88, Cys-57–Cys-81, and Cys-75–Cys-86. 3 residues coordinate Ca(2+): Tyr-27, Gly-29, and Gly-31. His-47 is an active-site residue. Asp-48 is a Ca(2+) binding site. Asp-89 is an active-site residue.

This sequence belongs to the phospholipase A2 family. Group II subfamily. D49 sub-subfamily. Homodimer. It depends on Ca(2+) as a cofactor. In terms of tissue distribution, expressed by the venom gland.

Its subcellular location is the secreted. It carries out the reaction a 1,2-diacyl-sn-glycero-3-phosphocholine + H2O = a 1-acyl-sn-glycero-3-phosphocholine + a fatty acid + H(+). In terms of biological role, snake venom phospholipase A2 (PLA2) that inhibits ADP-induced platelet aggregation. PLA2 catalyzes the calcium-dependent hydrolysis of the 2-acyl groups in 3-sn-phosphoglycerides. This chain is Acidic phospholipase A2, found in Deinagkistrodon acutus (Hundred-pace snake).